We begin with the raw amino-acid sequence, 450 residues long: MGSFLLCLLLVQLQWCLCSNVLDDLLQQTNIAFLSQQDVIGVIPVNQIPLVGVELCSMFETVGDGQDTLAAMLQTGVQTLVMDIGYDEDAGGWQMCGRTSLSEGISTVSRQIERLFPTLYANLVVLVLRGGAAEAHYEALRDAIGRVGRWTYSAEKVKATSPHLNSLLDDQEKRVLVVALDDSLCEALGTVAFGPEDVAYVEGNDTIDCSEHTDSWSFIEREFHWTDVREYVRLGCSPVITGKSVANISELEALVKVAQVWSWGAGEPALTDANSEMQRCASLGYDSATERATWKSTSCRQNLPVLCQAVNDRYSWLVGTRNLRFDQLNMDSCPSGYKPSVPRTPLEQREVERYLSEHHPSDGQYWIYLNSISVEKCWVVGGPETPCPYVALVSTRNFAAMIVTSSILVLLLLVLIILLDLVRVPIQDNRRSWKRALGSYSKAETEGVPM.

Positions 1 to 18 (MGSFLLCLLLVQLQWCLC) are cleaved as a signal peptide. The Extracellular segment spans residues 19–397 (SNVLDDLLQQ…PYVALVSTRN (379 aa)). 2 N-linked (GlcNAc...) asparagine glycosylation sites follow: Asn204 and Asn247. The helical transmembrane segment at 398–418 (FAAMIVTSSILVLLLLVLIIL) threads the bilayer. The Cytoplasmic segment spans residues 419-450 (LDLVRVPIQDNRRSWKRALGSYSKAETEGVPM).

It belongs to the MTC6 family.

It localises to the membrane. May be involved in telomere capping. The protein is Maintenance of telomere capping protein 6 (MTC6) of Eremothecium gossypii (strain ATCC 10895 / CBS 109.51 / FGSC 9923 / NRRL Y-1056) (Yeast).